The chain runs to 400 residues: MASVKAVSSAAPLALRIVAECPVSKARACSLTLPHCAVNTPVFMPVGTQGTMKGITADQLEDLDCQICLGNTYHLGMRPGPDLIEKANGLHGFMKWRRNLLTDSGGFQMVSLVELSEVTEEGVTFRSPYDGKEILLTPEQSIAIQNSLGSDIMMQLDDVVSSTVKGPRVEEAMHRSVRWLDRCIAANKNPDRQNLFAIIQGGLDAELRKACLKEMTKRDVPGFAIGGLGGGEEKDDFWKMVTLSTDHLPREKPRYLMGVGYAVDLVVCVALGCDMFDCVFPTRTARFGSALVPWGSLQLKQKQYAKDFQPIDPDCQCPTCRRHSRAYLHALFKSDTAAMHHITIHNISYQLSLMRSVRQSIIDQRFPEFVKEFMKRMFPSSSQYPSWAVEALQSVNICLS.

Asp103 functions as the Proton acceptor in the catalytic mechanism. Residues 103–107 (DSGGF), Asp157, Gln200, and Gly227 each bind queuine. The segment at 258 to 264 (GVGYAVD) is RNA binding. Catalysis depends on Asp277, which acts as the Nucleophile. Positions 282–286 (TRTAR) are RNA binding; important for wobble base 34 recognition. Zn(2+) is bound by residues Cys315, Cys317, Cys320, and His345.

This sequence belongs to the queuine tRNA-ribosyltransferase family. As to quaternary structure, heterodimer of a catalytic subunit qtrt1 and an accessory subunit qtrt2. Requires Zn(2+) as cofactor.

It localises to the cytoplasm. The protein resides in the mitochondrion outer membrane. The enzyme catalyses guanosine(34) in tRNA + queuine = queuosine(34) in tRNA + guanine. Catalytic subunit of the queuine tRNA-ribosyltransferase (TGT) that catalyzes the base-exchange of a guanine (G) residue with queuine (Q) at position 34 (anticodon wobble position) in tRNAs with GU(N) anticodons (tRNA-Asp, -Asn, -His and -Tyr), resulting in the hypermodified nucleoside queuosine (7-(((4,5-cis-dihydroxy-2-cyclopenten-1-yl)amino)methyl)-7-deazaguanosine). Catalysis occurs through a double-displacement mechanism. The nucleophile active site attacks the C1' of nucleotide 34 to detach the guanine base from the RNA, forming a covalent enzyme-RNA intermediate. The proton acceptor active site deprotonates the incoming queuine, allowing a nucleophilic attack on the C1' of the ribose to form the product. In Danio rerio (Zebrafish), this protein is Queuine tRNA-ribosyltransferase catalytic subunit 1.